Consider the following 106-residue polypeptide: MATPGPVIPEVPFEPSKPPVIEGLSPTVYRNPESFKEKFVRKTRENPVVPIGCLATAAALTYGLYSFHRGNSQRSQLMMRTRIAAQGFTVAAILLGLAVTAMKSRP.

Ala-2 is subject to N-acetylalanine. The 87-residue stretch at 20-106 folds into the HIG1 domain; it reads VIEGLSPTVY…LAVTAMKSRP (87 aa). 2 consecutive transmembrane segments (helical) span residues 47–67 and 83–103; these read PVVP…LYSF and IAAQ…TAMK. Over 104–106 the chain is Mitochondrial matrix; that stretch reads SRP.

In terms of assembly, associates with cytochrome c oxidase (COX, complex IV); proposed complex component.

The protein resides in the mitochondrion membrane. The protein localises to the mitochondrion inner membrane. Its function is as follows. Proposed subunit of cytochrome c oxidase (COX, complex IV), which is the terminal component of the mitochondrial respiratory chain that catalyzes the reduction of oxygen to water. May be involved in cytochrome c oxidase activity. May play a role in the assembly of respiratory supercomplexes. This Homo sapiens (Human) protein is HIG1 domain family member 2A, mitochondrial (HIGD2A).